A 249-amino-acid chain; its full sequence is Elongation factor Ts (249 aa).

Residues 82–85 form an involved in Mg(2+) ion dislocation from EF-Tu region; it reads TDFV. The tract at residues 215–249 is disordered; sequence QAGQLAPEAESTTETADATSETTTEKSSAKKKKKK. A compositionally biased stretch (low complexity) spans 222–236; sequence EAESTTETADATSET.

This sequence belongs to the EF-Ts family.

It is found in the cytoplasm. Associates with the EF-Tu.GDP complex and induces the exchange of GDP to GTP. It remains bound to the aminoacyl-tRNA.EF-Tu.GTP complex up to the GTP hydrolysis stage on the ribosome. This Rippkaea orientalis (strain PCC 8801 / RF-1) (Cyanothece sp. (strain PCC 8801)) protein is Elongation factor Ts.